The chain runs to 333 residues: Phenylalanine--tRNA ligase alpha subunit (333 aa).

Residue Glu258 coordinates Mg(2+).

Belongs to the class-II aminoacyl-tRNA synthetase family. Phe-tRNA synthetase alpha subunit type 1 subfamily. In terms of assembly, tetramer of two alpha and two beta subunits. Mg(2+) serves as cofactor.

The protein localises to the cytoplasm. It carries out the reaction tRNA(Phe) + L-phenylalanine + ATP = L-phenylalanyl-tRNA(Phe) + AMP + diphosphate + H(+). In Wigglesworthia glossinidia brevipalpis, this protein is Phenylalanine--tRNA ligase alpha subunit.